The chain runs to 483 residues: Macrophage receptor MARCO (483 aa).

At 1-48 (MGNKKALKEEAFLGSAEEGADFDQAMFPVMETFEINDPMPKKRNWGSF) the chain is on the cytoplasmic side. The chain crosses the membrane as a helical; Signal-anchor for type II membrane protein span at residues 49 to 69 (CTAVMAIHLILLTAGTTLLTL). Residues 70–483 (KVLSLQKWIL…HNEDAGVECR (414 aa)) lie on the Extracellular side of the membrane. Asparagine 85 and asparagine 137 each carry an N-linked (GlcNAc...) asparagine glycan. The segment at 146 to 386 (RIKGERGSPG…GEKGEKGQSF (241 aa)) is disordered. In terms of domain architecture, Collagen-like spans 148 to 383 (KGERGSPGIP…GQKGEKGEKG (236 aa)). Residues 153 to 166 (SPGIPGLQGPPGIK) show a composition bias toward low complexity. Positions 193 to 216 (KGSKGDKGLIGPKGEHGTKGDKGD) are enriched in basic and acidic residues. A compositionally biased stretch (low complexity) spans 273–286 (VPGTPGAAGPSGAK). Positions 376–386 (KGEKGEKGQSF) are enriched in basic and acidic residues. Positions 389–483 (VRIVGGTNRG…HNEDAGVECR (95 aa)) constitute an SRCR domain. Disulfide bonds link cysteine 412/cysteine 472, cysteine 425/cysteine 482, and cysteine 452/cysteine 462.

Homotrimer; disulfide-linked. Trimers may assemble in larger oligomers thus resulting in the creation of a large surface capable of interacting with very large ligands. In terms of processing, N-glycosylated. As to expression, expressed in alveolar macrophages, macrophages of lymph node sinues, and Kupffer cells in liver (at protein level).

The protein localises to the cell membrane. Its function is as follows. Pattern recognition receptor (PRR) which binds Gram-positive and Gram-negative bacteria. Also plays a role in binding of unopsonized particles by alveolar macrophages. Binds to the secretoglobin SCGB3A2. This is Macrophage receptor MARCO (MARCO) from Mesocricetus auratus (Golden hamster).